A 188-amino-acid polypeptide reads, in one-letter code: ATP-dependent protease subunit HslV (188 aa).

Residue T14 is part of the active site. A173, C176, and T179 together coordinate Na(+).

It belongs to the peptidase T1B family. HslV subfamily. In terms of assembly, a double ring-shaped homohexamer of HslV is capped on each side by a ring-shaped HslU homohexamer. The assembly of the HslU/HslV complex is dependent on binding of ATP.

It is found in the cytoplasm. It catalyses the reaction ATP-dependent cleavage of peptide bonds with broad specificity.. Its activity is regulated as follows. Allosterically activated by HslU binding. Functionally, protease subunit of a proteasome-like degradation complex believed to be a general protein degrading machinery. The protein is ATP-dependent protease subunit HslV of Caulobacter vibrioides (strain ATCC 19089 / CIP 103742 / CB 15) (Caulobacter crescentus).